The primary structure comprises 540 residues: Chaperonin GroEL (540 aa).

ATP contacts are provided by residues 30 to 33 (TLGP), 87 to 91 (DGTTT), Gly414, 479 to 481 (NAL), and Asp495.

The protein belongs to the chaperonin (HSP60) family. In terms of assembly, forms a cylinder of 14 subunits composed of two heptameric rings stacked back-to-back. Interacts with the co-chaperonin GroES.

The protein resides in the cytoplasm. The enzyme catalyses ATP + H2O + a folded polypeptide = ADP + phosphate + an unfolded polypeptide.. In terms of biological role, together with its co-chaperonin GroES, plays an essential role in assisting protein folding. The GroEL-GroES system forms a nano-cage that allows encapsulation of the non-native substrate proteins and provides a physical environment optimized to promote and accelerate protein folding. The protein is Chaperonin GroEL of Rubrobacter xylanophilus (strain DSM 9941 / JCM 11954 / NBRC 16129 / PRD-1).